A 372-amino-acid polypeptide reads, in one-letter code: Glutamate 5-kinase (372 aa).

ATP is bound at residue lysine 14. Serine 54, aspartate 141, and asparagine 153 together coordinate substrate. 173–174 serves as a coordination point for ATP; it reads TD. The 79-residue stretch at 280–358 folds into the PUA domain; sequence RGTLVLDDGA…EAIVRELGYM (79 aa).

The protein belongs to the glutamate 5-kinase family.

Its subcellular location is the cytoplasm. The catalysed reaction is L-glutamate + ATP = L-glutamyl 5-phosphate + ADP. The protein operates within amino-acid biosynthesis; L-proline biosynthesis; L-glutamate 5-semialdehyde from L-glutamate: step 1/2. In terms of biological role, catalyzes the transfer of a phosphate group to glutamate to form L-glutamate 5-phosphate. This chain is Glutamate 5-kinase, found in Pseudomonas syringae pv. tomato (strain ATCC BAA-871 / DC3000).